The chain runs to 603 residues: Conglutin beta 2 (603 aa).

A signal peptide spans 1–30; sequence MANMRVKFPTLVLLLGIVFLMAVSIGIAYG. Residues 36 to 105 show a composition bias toward basic and acidic residues; the sequence is KNHERPQERE…REPSRGREQE (70 aa). Disordered stretches follow at residues 36-177, 343-363, and 375-399; these read KNHE…RNPY, DGQE…DQGV, and LRKH…LRSD. Residues 137 to 147 are compositionally biased toward low complexity; that stretch reads QGSSSSSGRQS. Positions 148-172 are enriched in basic and acidic residues; it reads GYERREQREEREQQQEQDSRSESRR. One can recognise a Cupin type-1 1 domain in the interval 177-335; it reads YYFSYERFQT…TFNTRYEEIQ (159 aa). A compositionally biased stretch (low complexity) spans 381–393; the sequence is SSSGKGKPSESGP. The 161-residue stretch at 394 to 554 folds into the Cupin type-1 2 domain; it reads FNLRSDEPIY…TFPGSVEDVE (161 aa). An N-linked (GlcNAc...) asparagine glycan is attached at asparagine 504. A compositionally biased stretch (low complexity) spans 564 to 574; the sequence is YFANAQPQQQQ. The disordered stretch occupies residues 564-583; sequence YFANAQPQQQQQREKEGRRG.

This sequence belongs to the 7S seed storage protein family. In terms of assembly, component of globulins complexes which accumulate in seeds.

In terms of biological role, seed storage protein. Accumulates during seed development and is hydrolyzed after germination to provide a carbon and nitrogen source for the developing seedling. This chain is Conglutin beta 2, found in Lupinus angustifolius (Narrow-leaved blue lupine).